A 70-amino-acid chain; its full sequence is U2-agatoxin-Ao1p (70 aa).

The N-terminal stretch at 1-20 (MRAIISLILISAMVFSMIAA) is a signal peptide. The propeptide occupies 21-34 (VPXXEGLQLSEDER). Cystine bridges form between C37/C53, C44/C58, and C52/C68. A Leucine amide modification is found at L69.

Belongs to the neurotoxin 01 (U2-agtx) family. Expressed by the venom gland.

It localises to the secreted. In terms of biological role, insect active toxin causing rapid but reversible paralysis in crickets. No activity shown in mammals. Does not show effect on mammalian voltage-gated calcium channels. In Agelena orientalis (Funnel-web spider), this protein is U2-agatoxin-Ao1p.